A 321-amino-acid chain; its full sequence is Mas-related G-protein coupled receptor member D (321 aa).

The Extracellular portion of the chain corresponds to 1–33 (MNQTLNSSGTVESALNYSRGSTVHTAYLVLSSL). 3 N-linked (GlcNAc...) asparagine glycosylation sites follow: Asn-2, Asn-6, and Asn-16. The chain crosses the membrane as a helical span at residues 34–54 (AMFTCLCGMAGNSMVIWLLGF). Residues 55 to 59 (RMHRN) are Cytoplasmic-facing. A helical transmembrane segment spans residues 60-80 (PFCIYILNLAAADLLFLFSMA). The Extracellular segment spans residues 81 to 112 (STLSLETQPLVNTTDKVHELMKRLMYFAYTVG). Asn-92 is a glycosylation site (N-linked (GlcNAc...) asparagine). A helical transmembrane segment spans residues 113–133 (LSLLTAISTQRCLSVLFPIWF). Residues 134-142 (KCHRPRHLS) are Cytoplasmic-facing. A helical membrane pass occupies residues 143 to 163 (AWVCGLLWTLCLLMNGLTSSF). The Extracellular portion of the chain corresponds to 164-184 (CSKFLKFNEDRCFRVDMVQAA). Residues 185–205 (LIMGVLTPVMTLSSLTLFVWV) traverse the membrane as a helical segment. The Cytoplasmic portion of the chain corresponds to 206–218 (RRSSQQWRRQPTR). The chain crosses the membrane as a helical span at residues 219–239 (LFVVVLASVLVFLICSLPLSI). Over 240–257 (YWFVLYWLSLPPEMQVLC) the chain is Extracellular. Residues 258-280 (FSLSRLSSSVSSSANPVIYFLVG) traverse the membrane as a helical segment. Residues 281–321 (SRRSHRLPTRSLGTVLQQALREEPELEGGETPTVGTNEMGA) are Cytoplasmic-facing. The tract at residues 302-321 (EEPELEGGETPTVGTNEMGA) is disordered.

It belongs to the G-protein coupled receptor 1 family. Mas subfamily.

It is found in the cell membrane. Its function is as follows. May regulate nociceptor function and/or development, including the sensation or modulation of pain. Functions as a specific membrane receptor for beta-alanine. Beta-alanine at micromolar doses specifically evoked Ca(2+) influx in cells expressing the receptor. Beta-alanine decreases forskolin-stimulated cAMP production in cells expressing the receptor, suggesting that the receptor couples with G-protein G(q) and G(i). The polypeptide is Mas-related G-protein coupled receptor member D (MRGPRD) (Homo sapiens (Human)).